The following is a 304-amino-acid chain: ATP synthase gamma chain (304 aa).

This sequence belongs to the ATPase gamma chain family. F-type ATPases have 2 components, CF(1) - the catalytic core - and CF(0) - the membrane proton channel. CF(1) has five subunits: alpha(3), beta(3), gamma(1), delta(1), epsilon(1). CF(0) has three main subunits: a, b and c.

It localises to the cell membrane. Functionally, produces ATP from ADP in the presence of a proton gradient across the membrane. The gamma chain is believed to be important in regulating ATPase activity and the flow of protons through the CF(0) complex. In Thermobifida fusca (strain YX), this protein is ATP synthase gamma chain.